We begin with the raw amino-acid sequence, 439 residues long: Methionine aminopeptidase 2-2 (439 aa).

The disordered stretch occupies residues methionine 1–asparagine 90. A compositionally biased stretch (acidic residues) spans glutamate 28–alanine 41. A compositionally biased stretch (basic residues) spans lysine 56–glycine 72. Histidine 196 lines the substrate pocket. Aspartate 216, aspartate 227, and histidine 296 together coordinate a divalent metal cation. Histidine 304 lines the substrate pocket. The a divalent metal cation site is built by glutamate 329 and glutamate 424.

The protein belongs to the peptidase M24A family. Methionine aminopeptidase eukaryotic type 2 subfamily. It depends on Co(2+) as a cofactor. Zn(2+) is required as a cofactor. Mn(2+) serves as cofactor. Requires Fe(2+) as cofactor.

It is found in the cytoplasm. The catalysed reaction is Release of N-terminal amino acids, preferentially methionine, from peptides and arylamides.. Cotranslationally removes the N-terminal methionine from nascent proteins. The N-terminal methionine is often cleaved when the second residue in the primary sequence is small and uncharged (Met-Ala-, Cys, Gly, Pro, Ser, Thr, or Val). The polypeptide is Methionine aminopeptidase 2-2 (Penicillium rubens (strain ATCC 28089 / DSM 1075 / NRRL 1951 / Wisconsin 54-1255) (Penicillium chrysogenum)).